The chain runs to 200 residues: ATP-dependent Clp protease proteolytic subunit (200 aa).

Serine 104 acts as the Nucleophile in catalysis. Histidine 129 is an active-site residue.

The protein belongs to the peptidase S14 family. In terms of assembly, fourteen ClpP subunits assemble into 2 heptameric rings which stack back to back to give a disk-like structure with a central cavity, resembling the structure of eukaryotic proteasomes.

The protein resides in the cytoplasm. The enzyme catalyses Hydrolysis of proteins to small peptides in the presence of ATP and magnesium. alpha-casein is the usual test substrate. In the absence of ATP, only oligopeptides shorter than five residues are hydrolyzed (such as succinyl-Leu-Tyr-|-NHMec, and Leu-Tyr-Leu-|-Tyr-Trp, in which cleavage of the -Tyr-|-Leu- and -Tyr-|-Trp bonds also occurs).. In terms of biological role, cleaves peptides in various proteins in a process that requires ATP hydrolysis. Has a chymotrypsin-like activity. Plays a major role in the degradation of misfolded proteins. The sequence is that of ATP-dependent Clp protease proteolytic subunit from Rubrobacter xylanophilus (strain DSM 9941 / JCM 11954 / NBRC 16129 / PRD-1).